We begin with the raw amino-acid sequence, 137 residues long: Peptide methionine sulfoxide reductase MsrB (137 aa).

Residues 7–129 (PDHPATELNE…NSASLSFTDG (123 aa)) enclose the MsrB domain. 4 residues coordinate Zn(2+): C46, C49, C95, and C98. Residue C118 is the Nucleophile of the active site.

It belongs to the MsrB Met sulfoxide reductase family. Zn(2+) serves as cofactor.

It carries out the reaction L-methionyl-[protein] + [thioredoxin]-disulfide + H2O = L-methionyl-(R)-S-oxide-[protein] + [thioredoxin]-dithiol. In Serratia proteamaculans (strain 568), this protein is Peptide methionine sulfoxide reductase MsrB.